The primary structure comprises 379 residues: ATP phosphoribosyltransferase regulatory subunit (379 aa).

The protein belongs to the class-II aminoacyl-tRNA synthetase family. HisZ subfamily. In terms of assembly, heteromultimer composed of HisG and HisZ subunits.

The protein localises to the cytoplasm. Its pathway is amino-acid biosynthesis; L-histidine biosynthesis; L-histidine from 5-phospho-alpha-D-ribose 1-diphosphate: step 1/9. Functionally, required for the first step of histidine biosynthesis. May allow the feedback regulation of ATP phosphoribosyltransferase activity by histidine. This chain is ATP phosphoribosyltransferase regulatory subunit, found in Paramagnetospirillum magneticum (strain ATCC 700264 / AMB-1) (Magnetospirillum magneticum).